The primary structure comprises 551 residues: ATP synthase subunit alpha, mitochondrial (551 aa).

Position 210–217 (210–217 (GDRQTGKT)) interacts with ATP.

It belongs to the ATPase alpha/beta chains family. In terms of assembly, F-type ATPases have 2 components, CF(1) - the catalytic core - and CF(0) - the membrane proton channel. CF(1) has five subunits: alpha(3), beta(3), gamma(1), delta(1), epsilon(1). CF(0) has three main subunits: a, b and c.

Its subcellular location is the mitochondrion. It is found in the mitochondrion inner membrane. In terms of biological role, mitochondrial membrane ATP synthase (F(1)F(0) ATP synthase or Complex V) produces ATP from ADP in the presence of a proton gradient across the membrane which is generated by electron transport complexes of the respiratory chain. F-type ATPases consist of two structural domains, F(1) - containing the extramembraneous catalytic core, and F(0) - containing the membrane proton channel, linked together by a central stalk and a peripheral stalk. During catalysis, ATP synthesis in the catalytic domain of F(1) is coupled via a rotary mechanism of the central stalk subunits to proton translocation. Subunits alpha and beta form the catalytic core in F(1). Rotation of the central stalk against the surrounding alpha(3)beta(3) subunits leads to hydrolysis of ATP in three separate catalytic sites on the beta subunits. Subunit alpha does not bear the catalytic high-affinity ATP-binding sites. In Neurospora crassa (strain ATCC 24698 / 74-OR23-1A / CBS 708.71 / DSM 1257 / FGSC 987), this protein is ATP synthase subunit alpha, mitochondrial (atp-1).